Here is a 247-residue protein sequence, read N- to C-terminus: Uridylate kinase (247 aa).

Residue 15-18 coordinates ATP; that stretch reads KLSG. Residues 23 to 28 are involved in allosteric activation by GTP; the sequence is GEEGFG. Position 57 (G57) interacts with UMP. The ATP site is built by G58 and R62. UMP contacts are provided by residues D77 and 138 to 145; that span reads TGNPFCTT. The ATP site is built by T165, Y171, and D174.

It belongs to the UMP kinase family. Homohexamer.

It is found in the cytoplasm. The enzyme catalyses UMP + ATP = UDP + ADP. The protein operates within pyrimidine metabolism; CTP biosynthesis via de novo pathway; UDP from UMP (UMPK route): step 1/1. Its activity is regulated as follows. Allosterically activated by GTP. Inhibited by UTP. Its function is as follows. Catalyzes the reversible phosphorylation of UMP to UDP. This Shewanella loihica (strain ATCC BAA-1088 / PV-4) protein is Uridylate kinase.